The primary structure comprises 119 residues: Holo-[acyl-carrier-protein] synthase (119 aa).

Mg(2+) contacts are provided by aspartate 8 and glutamate 59.

The protein belongs to the P-Pant transferase superfamily. AcpS family. It depends on Mg(2+) as a cofactor.

The protein resides in the cytoplasm. It carries out the reaction apo-[ACP] + CoA = holo-[ACP] + adenosine 3',5'-bisphosphate + H(+). Functionally, transfers the 4'-phosphopantetheine moiety from coenzyme A to a Ser of acyl-carrier-protein. The sequence is that of Holo-[acyl-carrier-protein] synthase from Staphylococcus aureus (strain JH1).